A 432-amino-acid chain; its full sequence is EF-hand calcium-binding domain-containing protein 3 (432 aa).

2 consecutive EF-hand domains span residues 45 to 80 (AQLEAFRNAYNFFTKDRTGCIDSHGLMSTVAKLGMN) and 81 to 116 (LNAYDIYNELKCADRDRDGKINFSDFIDVLTDKKLF). Ca(2+)-binding residues include D94, D96, D98, K100, and D105. Residue Y273 is modified to Phosphotyrosine. The interval 394-432 (NVNKTSPSNSGLSSPSDLSESDPETGRKRKRKSSRGFRQ) is disordered. The span at 399–411 (SPSNSGLSSPSDL) shows a compositional bias: low complexity. Basic residues predominate over residues 420–432 (RKRKRKSSRGFRQ).

The polypeptide is EF-hand calcium-binding domain-containing protein 3 (Efcab3) (Rattus norvegicus (Rat)).